Here is a 178-residue protein sequence, read N- to C-terminus: Caveolin-1 (178 aa).

N-acetylserine is present on S2. The residue at position 2 (S2) is a Phosphoserine. Residues 2 to 94 are required for homooligomerization; sequence SGGKYVDSEG…WKASFTTFTV (93 aa). The Cytoplasmic segment spans residues 2-104; sequence SGGKYVDSEG…TKYWFYRLLS (103 aa). K5 carries the post-translational modification N6-acetyllysine; alternate. K5 is covalently cross-linked (Glycyl lysine isopeptide (Lys-Gly) (interchain with G-Cter in ubiquitin); alternate). Y6 is modified (phosphotyrosine). At S9 the chain carries Phosphoserine. Y14 bears the Phosphotyrosine; by ABL1 mark. Y25 bears the Phosphotyrosine mark. Glycyl lysine isopeptide (Lys-Gly) (interchain with G-Cter in ubiquitin) cross-links involve residues K26 and K30. A Phosphoserine modification is found at S37. Residues K39, K47, and K57 each participate in a glycyl lysine isopeptide (Lys-Gly) (interchain with G-Cter in ubiquitin) cross-link. An interaction with CAVIN3 region spans residues 82–94; that stretch reads DGIWKASFTTFTV. Positions 105–125 form an intramembrane region, helical; it reads ALFGIPMALIWGIYFAILSFL. Topologically, residues 126–178 are cytoplasmic; sequence HIWAVVPCIKSFLIEIQCISRVYSIYIHTVCDPLFEAIGKIFSNVRISLQKEI. An interacts with SPRY1, SPRY2, SPRY3 and SPRY4 region spans residues 131–142; sequence VPCIKSFLIEIQ. S-palmitoyl cysteine attachment occurs at residues C133, C143, and C156. Residues 149–160 are interacts with SPRY1, SPRY2, and SPRY4; that stretch reads SIYIHTVCDPLF. Residues 167–178 are interacts with SPRY1, SPRY2, SPRY3 and SPRY4; that stretch reads FSNVRISLQKEI.

This sequence belongs to the caveolin family. In terms of assembly, homooligomer. Interacts with GLIPR2. Interacts with NOSTRIN. Interacts with SNAP25 and STX1A. Interacts (via the N-terminus) with DPP4; the interaction is direct. Interacts with CTNNB1, CDH1 and JUP. Interacts with PACSIN2; this interaction induces membrane tubulation. Interacts with SLC7A9. Interacts with BMX and BTK. Interacts with TGFBR1. Interacts with CAVIN3 (via leucine-zipper domain) in a cholesterol-sensitive manner. Interacts with CAVIN1. Interacts with EHD2 in a cholesterol-dependent manner. Forms a ternary complex with UBXN6 and VCP; mediates CAV1 targeting to lysosomes for degradation. Interacts with ABCG1; this interaction regulates ABCG1-mediated cholesterol efflux. Interacts with NEU3; this interaction enhances NEU3 sialidase activity within caveola. Interacts (via C-terminus) with SPRY1, SPRY2 (via C-terminus), SPRY3, and SPRY4. Interacts with IGFBP5; this interaction allows trafficking of IGFBP5 from the plasma membrane to the nucleus. In terms of processing, phosphorylated at Tyr-14 by ABL1 in response to oxidative stress. Ubiquitinated. Undergo monoubiquitination and multi- and/or polyubiquitination. Monoubiquitination of N-terminal lysines promotes integration in a ternary complex with UBXN6 and VCP which promotes oligomeric CAV1 targeting to lysosomes for degradation. Ubiquitinated by ZNRF1; leading to degradation and modulation of the TLR4-mediated immune response.

It is found in the golgi apparatus membrane. Its subcellular location is the cell membrane. The protein localises to the membrane. The protein resides in the caveola. It localises to the membrane raft. Functionally, may act as a scaffolding protein within caveolar membranes. Forms a stable heterooligomeric complex with CAV2 that targets to lipid rafts and drives caveolae formation. Mediates the recruitment of CAVIN proteins (CAVIN1/2/3/4) to the caveolae. Interacts directly with G-protein alpha subunits and can functionally regulate their activity. Involved in the costimulatory signal essential for T-cell receptor (TCR)-mediated T-cell activation. Its binding to DPP4 induces T-cell proliferation and NF-kappa-B activation in a T-cell receptor/CD3-dependent manner. Recruits CTNNB1 to caveolar membranes and may regulate CTNNB1-mediated signaling through the Wnt pathway. Negatively regulates TGFB1-mediated activation of SMAD2/3 by mediating the internalization of TGFBR1 from membrane rafts leading to its subsequent degradation. Binds 20(S)-hydroxycholesterol (20(S)-OHC). The protein is Caveolin-1 (CAV1) of Aotus nancymaae (Ma's night monkey).